Here is a 384-residue protein sequence, read N- to C-terminus: 1-deoxy-D-xylulose 5-phosphate reductoisomerase (384 aa).

6 residues coordinate NADPH: Thr10, Gly11, Ser12, Ile13, Lys37, and Asn124. Residue Lys125 participates in 1-deoxy-D-xylulose 5-phosphate binding. Glu126 serves as a coordination point for NADPH. Mn(2+) is bound at residue Asp150. 4 residues coordinate 1-deoxy-D-xylulose 5-phosphate: Ser151, Glu152, Ser176, and His199. Glu152 provides a ligand contact to Mn(2+). An NADPH-binding site is contributed by Gly205. 1-deoxy-D-xylulose 5-phosphate-binding residues include Ser212, Asn217, Lys218, and Glu221. Position 221 (Glu221) interacts with Mn(2+).

The protein belongs to the DXR family. It depends on Mg(2+) as a cofactor. Requires Mn(2+) as cofactor.

It catalyses the reaction 2-C-methyl-D-erythritol 4-phosphate + NADP(+) = 1-deoxy-D-xylulose 5-phosphate + NADPH + H(+). The protein operates within isoprenoid biosynthesis; isopentenyl diphosphate biosynthesis via DXP pathway; isopentenyl diphosphate from 1-deoxy-D-xylulose 5-phosphate: step 1/6. Functionally, catalyzes the NADPH-dependent rearrangement and reduction of 1-deoxy-D-xylulose-5-phosphate (DXP) to 2-C-methyl-D-erythritol 4-phosphate (MEP). This is 1-deoxy-D-xylulose 5-phosphate reductoisomerase from Clostridium tetani (strain Massachusetts / E88).